Consider the following 203-residue polypeptide: MKKWLAISCLIAGMTSTAVYADAAKDLQGRLNKVNSFHANFSQKVTSADGAAVQEGEGELWLKRPNLFNWKTTSPDESTLISDGKTLWFYNPFVEQVTATWLKDATGNTPFILITRNDASDWNKYDVRQKGDDFELTPKSASGNLKQFAINVTTNGTIKQFTATEQDGQRSTYVLKNQQNAAVDAAQFTFTPPKGVTLDDQRQ.

An N-terminal signal peptide occupies residues 1–20 (MKKWLAISCLIAGMTSTAVY).

Belongs to the LolA family. As to quaternary structure, monomer.

It localises to the periplasm. Functionally, participates in the translocation of lipoproteins from the inner membrane to the outer membrane. Only forms a complex with a lipoprotein if the residue after the N-terminal Cys is not an aspartate (The Asp acts as a targeting signal to indicate that the lipoprotein should stay in the inner membrane). This chain is Outer-membrane lipoprotein carrier protein, found in Pectobacterium carotovorum subsp. carotovorum (strain PC1).